A 482-amino-acid polypeptide reads, in one-letter code: Glucose starvation modulator protein 1 (482 aa).

Positions 20 to 48 (CVFCHEKHLQCDVGRPCQNCEKRNIGESC) form a DNA-binding region, zn(2)-C6 fungal-type. Residues 350–422 (LLEYENMSKM…KLFNEYLAFS (73 aa)) enclose the PAS domain.

Belongs to the ERT1/acuK family.

Its subcellular location is the nucleus. Functionally, transcription factor which regulates nonfermentable carbon utilization. This Eremothecium gossypii (strain ATCC 10895 / CBS 109.51 / FGSC 9923 / NRRL Y-1056) (Yeast) protein is Glucose starvation modulator protein 1 (GSM1).